The chain runs to 68 residues: ATP synthase protein 8 (68 aa).

Residues 8–24 (TWLTIITPTLLALFLIT) traverse the membrane as a helical segment. K54 bears the N6-acetyllysine; alternate mark. K54 is subject to N6-succinyllysine; alternate. K57 carries the post-translational modification N6-acetyllysine.

Belongs to the ATPase protein 8 family. F-type ATPases have 2 components, CF(1) - the catalytic core - and CF(0) - the membrane proton channel. Component of an ATP synthase complex composed of ATP5PB, ATP5MC1, ATP5F1E, ATP5PD, ATP5ME, ATP5PF, ATP5MF, MT-ATP6, MT-ATP8, ATP5F1A, ATP5F1B, ATP5F1D, ATP5F1C, ATP5PO, ATP5MG, ATP5MK and ATP5MJ. Interacts with PRICKLE3.

It localises to the mitochondrion membrane. Functionally, mitochondrial membrane ATP synthase (F(1)F(0) ATP synthase or Complex V) produces ATP from ADP in the presence of a proton gradient across the membrane which is generated by electron transport complexes of the respiratory chain. F-type ATPases consist of two structural domains, F(1) - containing the extramembraneous catalytic core and F(0) - containing the membrane proton channel, linked together by a central stalk and a peripheral stalk. During catalysis, ATP synthesis in the catalytic domain of F(1) is coupled via a rotary mechanism of the central stalk subunits to proton translocation. Part of the complex F(0) domain. Minor subunit located with subunit a in the membrane. This is ATP synthase protein 8 (MT-ATP8) from Pongo pygmaeus (Bornean orangutan).